A 378-amino-acid chain; its full sequence is Ribosomal RNA large subunit methyltransferase G (378 aa).

This sequence belongs to the methyltransferase superfamily. RlmG family.

It localises to the cytoplasm. It carries out the reaction guanosine(1835) in 23S rRNA + S-adenosyl-L-methionine = N(2)-methylguanosine(1835) in 23S rRNA + S-adenosyl-L-homocysteine + H(+). Its function is as follows. Specifically methylates the guanine in position 1835 (m2G1835) of 23S rRNA. The sequence is that of Ribosomal RNA large subunit methyltransferase G from Shigella flexneri serotype 5b (strain 8401).